Reading from the N-terminus, the 805-residue chain is Ubiquitin carboxyl-terminal hydrolase 10-B (805 aa).

Disordered regions lie at residues A136–G173 and D284–V305. Composition is skewed to polar residues over residues N143–G153 and D284–E298. One can recognise a USP domain in the interval R422–V802. C431 acts as the Nucleophile in catalysis. Residues E573–R600 form a disordered region. H756 (proton acceptor) is an active-site residue.

Belongs to the peptidase C19 family. USP10 subfamily.

It is found in the cytoplasm. Its subcellular location is the nucleus. The catalysed reaction is Thiol-dependent hydrolysis of ester, thioester, amide, peptide and isopeptide bonds formed by the C-terminal Gly of ubiquitin (a 76-residue protein attached to proteins as an intracellular targeting signal).. Its function is as follows. Hydrolase that can remove conjugated ubiquitin from target proteins such as p53/tp53, rps2/us5, rps3/us3, rps10/eS10, becn1, snx3 and cftr. Acts as an essential regulator of p53/tp53 stability: in unstressed cells, specifically deubiquitinates p53/tp53 in the cytoplasm, leading to counteracts MDM2 action and stabilize p53/tp53. Following DNA damage, translocates to the nucleus and deubiquitinates p53/tp53, leading to regulate the p53/TP53-dependent DNA damage response. Component of a regulatory loop that controls autophagy and p53/tp53 levels. Plays a key role in 40S ribosome subunit recycling when a ribosome has stalled during translation: acts both by inhibiting formation of stress granules, which store stalled translation pre-initiation complexes, and mediating deubiquitination of 40S ribosome subunits. Deubiquitinates cftr in early endosomes, enhancing its endocytic recycling. The sequence is that of Ubiquitin carboxyl-terminal hydrolase 10-B (usp10-b) from Xenopus laevis (African clawed frog).